A 327-amino-acid chain; its full sequence is Serpentine receptor class alpha-12 (327 aa).

Residues 1-18 lie on the Extracellular side of the membrane; sequence MGCASEIQAEIFTSFGQL. Residues 19–39 form a helical membrane-spanning segment; that stretch reads FYASFQTILFLATIIGSLLAI. Over 40 to 53 the chain is Cytoplasmic; sequence FELCKKTTVPDSTR. Residues 54 to 74 form a helical membrane-spanning segment; the sequence is VLLIGSLFFANAHEFAYFTAP. Residues 75–98 are Extracellular-facing; the sequence is LKVFQLNIFNTNTSCYPLISTRDC. Residues 99 to 119 traverse the membrane as a helical segment; that stretch reads IPTTTVLAMGISGNMLIQSAL. The Cytoplasmic segment spans residues 120–138; sequence SIDRLLATIFPFSYSRMRA. The helical transmembrane segment at 139–159 threads the bilayer; sequence LPGFVLLIMVLIPAMFTYSWI. Over 160 to 185 the chain is Extracellular; that stretch reads RLDIVLDDYQMFCSQWSANISTRANT. The chain crosses the membrane as a helical span at residues 186–206; it reads FLEICSYLTVAHIIINCLIIL. Topologically, residues 207–234 are cytoplasmic; it reads RNRAIEKRCRFDVTQRYLTSENLKTTQA. Residues 235-255 traverse the membrane as a helical segment; sequence ICYLSIAQFLAMFMYSGGVLL. Residues 256 to 270 are Extracellular-facing; the sequence is MRKNRENIPTLIYFN. The chain crosses the membrane as a helical span at residues 271–291; it reads VIVWVYAPPYACVSLAPLILF. Topologically, residues 292 to 327 are cytoplasmic; sequence SLWNLKKQRHIQIKSVQSAQKETQDDYIRKLQKSWK.

This sequence belongs to the nematode receptor-like protein sra family. As to expression, expressed in neurons RIF/RIG and PVT.

Its subcellular location is the membrane. The chain is Serpentine receptor class alpha-12 (sra-12) from Caenorhabditis elegans.